We begin with the raw amino-acid sequence, 480 residues long: Probable efflux pump outer membrane protein SepC (480 aa).

An N-terminal signal peptide occupies residues 1-16 (MKTHYLSIALSVALSG). C17 carries the N-palmitoyl cysteine lipid modification. C17 carries S-diacylglycerol cysteine lipidation.

It belongs to the outer membrane factor (OMF) (TC 1.B.17) family.

The protein resides in the cell outer membrane. Probable outer membrane component of the SepABC efflux pump with unknown specificity. This is Probable efflux pump outer membrane protein SepC (sepC) from Pseudomonas putida (strain ATCC 700007 / DSM 6899 / JCM 31910 / BCRC 17059 / LMG 24140 / F1).